The sequence spans 340 residues: Phenylalanine--tRNA ligase alpha subunit (340 aa).

Residue Glu-255 coordinates Mg(2+).

Belongs to the class-II aminoacyl-tRNA synthetase family. Phe-tRNA synthetase alpha subunit type 1 subfamily. As to quaternary structure, tetramer of two alpha and two beta subunits. Mg(2+) serves as cofactor.

The protein resides in the cytoplasm. It carries out the reaction tRNA(Phe) + L-phenylalanine + ATP = L-phenylalanyl-tRNA(Phe) + AMP + diphosphate + H(+). In Desulforamulus reducens (strain ATCC BAA-1160 / DSM 100696 / MI-1) (Desulfotomaculum reducens), this protein is Phenylalanine--tRNA ligase alpha subunit.